A 677-amino-acid polypeptide reads, in one-letter code: MAKKFELVSKYKPAGDQPKAIESLLDNLDAGLAHQVLLGVTGSGKTFTMANVIERSQRPTLILAHNKTLAAQLYGEMKEYFPNNAVEYFVSYYDYYQPEAYVPTTDTFIEKDASINDHIEQMRLSATKALMERRDVVLVASVSAIYGLGDPESYMKMMLHLRRGDIIDQRDVLRRLAQLQYKRNDAAFERGTYRVRGDVIDIFPAESEEIAVRLELFDSEVDRISFFEPLTGQITEKDVARATIYPKTHYVTPREVLVKAIEKIKDELKDRRDILLKQNKLIEEQRINQRTQFDIEMMLELGYCSGIENYSRYLSGRAPGEPPPTLMDYLPDNALLIIDESHVTVSQIGAMYKGDRSRKENLVEYGFRLPSALDNRPLKFDEFEAIAPQTLYVSATPGKYELERSGNEVVEQVVRPTGLIDPQIEVRPVATQVDDLMSEIRLRTEVGERVLATTLTKKMSEDLADYLDEHGIKVRYLHSDIDTVERMEIIRDLRLGKFDVLVGINLLREGLDMPEVSLVAILDADKEGFLRSDRSLIQTIGRAARNVNGRAILYADRITGSMQRAMDETDRRREKQIAYNKEHGITPQGLNKDITDVMDLGQGSAKARKSKAEKALAEVASGYDARTVVVKDAKAVMKEIDAKEKEMYKAAQNLEFEQAGKLRDEVAELREQLKRAV.

A Helicase ATP-binding domain is found at Asp-26–Val-414. Gly-39–Thr-46 lines the ATP pocket. The Beta-hairpin signature appears at Tyr-92–Ile-115. The region spanning Gln-432–Met-598 is the Helicase C-terminal domain. Positions Met-637–Gln-672 constitute a UVR domain.

It belongs to the UvrB family. As to quaternary structure, forms a heterotetramer with UvrA during the search for lesions. Interacts with UvrC in an incision complex.

The protein resides in the cytoplasm. Its function is as follows. The UvrABC repair system catalyzes the recognition and processing of DNA lesions. A damage recognition complex composed of 2 UvrA and 2 UvrB subunits scans DNA for abnormalities. Upon binding of the UvrA(2)B(2) complex to a putative damaged site, the DNA wraps around one UvrB monomer. DNA wrap is dependent on ATP binding by UvrB and probably causes local melting of the DNA helix, facilitating insertion of UvrB beta-hairpin between the DNA strands. Then UvrB probes one DNA strand for the presence of a lesion. If a lesion is found the UvrA subunits dissociate and the UvrB-DNA preincision complex is formed. This complex is subsequently bound by UvrC and the second UvrB is released. If no lesion is found, the DNA wraps around the other UvrB subunit that will check the other stand for damage. The chain is UvrABC system protein B from Idiomarina loihiensis (strain ATCC BAA-735 / DSM 15497 / L2-TR).